The sequence spans 267 residues: Probable ribose-5-phosphate isomerase 1 (267 aa).

Gly-2 bears the N-acetylglycine mark. Ser-92 is modified (phosphoserine).

This sequence belongs to the ribose 5-phosphate isomerase family. As to expression, expressed in roots, cotyledons, leaves and flowers.

Its subcellular location is the cytoplasm. The enzyme catalyses aldehydo-D-ribose 5-phosphate = D-ribulose 5-phosphate. It participates in carbohydrate degradation; pentose phosphate pathway; D-ribose 5-phosphate from D-ribulose 5-phosphate (non-oxidative stage): step 1/1. Its function is as follows. Catalyzes the reversible conversion of ribose-5-phosphate to ribulose 5-phosphate. The polypeptide is Probable ribose-5-phosphate isomerase 1 (RPI1) (Arabidopsis thaliana (Mouse-ear cress)).